The chain runs to 149 residues: Large ribosomal subunit protein uL13 (149 aa).

The protein belongs to the universal ribosomal protein uL13 family. Part of the 50S ribosomal subunit.

This protein is one of the early assembly proteins of the 50S ribosomal subunit, although it is not seen to bind rRNA by itself. It is important during the early stages of 50S assembly. The protein is Large ribosomal subunit protein uL13 of Borrelia duttonii (strain Ly).